The sequence spans 126 residues: MADLQKLVDDLSALTVLEAAELSKLLEEKWGVSAAAAVAVAAPAGGAGAGAPAAEVKDEFDVILTGDGGKKINVIKEVRAITGLGLTEAKTLVESAPKAVKEGVNKDEAEKLKKQLEEAGATVELK.

Belongs to the bacterial ribosomal protein bL12 family. As to quaternary structure, homodimer. Part of the ribosomal stalk of the 50S ribosomal subunit. Forms a multimeric L10(L12)X complex, where L10 forms an elongated spine to which 2 to 4 L12 dimers bind in a sequential fashion. Binds GTP-bound translation factors.

Forms part of the ribosomal stalk which helps the ribosome interact with GTP-bound translation factors. Is thus essential for accurate translation. This is Large ribosomal subunit protein bL12 from Rhizorhabdus wittichii (strain DSM 6014 / CCUG 31198 / JCM 15750 / NBRC 105917 / EY 4224 / RW1) (Sphingomonas wittichii).